The following is a 243-amino-acid chain: tRNA1(Val) (adenine(37)-N6)-methyltransferase (243 aa).

This sequence belongs to the methyltransferase superfamily. tRNA (adenine-N(6)-)-methyltransferase family.

It localises to the cytoplasm. It catalyses the reaction adenosine(37) in tRNA1(Val) + S-adenosyl-L-methionine = N(6)-methyladenosine(37) in tRNA1(Val) + S-adenosyl-L-homocysteine + H(+). Its function is as follows. Specifically methylates the adenine in position 37 of tRNA(1)(Val) (anticodon cmo5UAC). This Shewanella woodyi (strain ATCC 51908 / MS32) protein is tRNA1(Val) (adenine(37)-N6)-methyltransferase.